Here is a 600-residue protein sequence, read N- to C-terminus: Elongation factor 4 (600 aa).

The tr-type G domain maps to 4–186 (SKIRNFSIIA…AIVEKIPSPS (183 aa)). Residues 16–21 (DHGKST) and 133–136 (NKID) each bind GTP.

The protein belongs to the TRAFAC class translation factor GTPase superfamily. Classic translation factor GTPase family. LepA subfamily.

The protein resides in the cell membrane. It carries out the reaction GTP + H2O = GDP + phosphate + H(+). Its function is as follows. Required for accurate and efficient protein synthesis under certain stress conditions. May act as a fidelity factor of the translation reaction, by catalyzing a one-codon backward translocation of tRNAs on improperly translocated ribosomes. Back-translocation proceeds from a post-translocation (POST) complex to a pre-translocation (PRE) complex, thus giving elongation factor G a second chance to translocate the tRNAs correctly. Binds to ribosomes in a GTP-dependent manner. In Mycoplasma mycoides subsp. mycoides SC (strain CCUG 32753 / NCTC 10114 / PG1), this protein is Elongation factor 4.